The chain runs to 185 residues: Elongation factor P (185 aa).

This sequence belongs to the elongation factor P family.

It is found in the cytoplasm. It functions in the pathway protein biosynthesis; polypeptide chain elongation. Its function is as follows. Involved in peptide bond synthesis. Stimulates efficient translation and peptide-bond synthesis on native or reconstituted 70S ribosomes in vitro. Probably functions indirectly by altering the affinity of the ribosome for aminoacyl-tRNA, thus increasing their reactivity as acceptors for peptidyl transferase. The sequence is that of Elongation factor P from Agathobacter rectalis (strain ATCC 33656 / DSM 3377 / JCM 17463 / KCTC 5835 / VPI 0990) (Eubacterium rectale).